Here is a 562-residue protein sequence, read N- to C-terminus: Cytochrome c oxidase subunit 1 (562 aa).

A helical transmembrane segment spans residues 21–41 (TLYFLVLGFLALIVGSLFGPF). Histidine 72 lines the Fe(II)-heme a pocket. Helical transmembrane passes span 74–94 (VLNA…YLPA), 105–125 (LMWL…LPLL), 144–164 (AFYL…YIVL), 187–207 (VVFW…AVLF), 227–247 (LFWW…YAII), 267–287 (LAFL…QFAD), 300–320 (VLTL…AASL), and 345–365 (AFVA…GGIV). Residues histidine 233, tyrosine 237, histidine 282, and histidine 283 each coordinate Cu cation. Residues 233–237 (HPIVY) constitute a cross-link (1'-histidyl-3'-tyrosine (His-Tyr)). Histidine 384 contributes to the heme a3 binding site. 4 helical membrane passes run 385 to 405 (FHLQ…YWLL), 420 to 440 (LGLA…VGLH), 471 to 491 (VLAG…LFSV), and 527 to 547 (IGFW…PTLV). Histidine 386 contacts Fe(II)-heme a.

This sequence belongs to the heme-copper respiratory oxidase family. Requires heme as cofactor. The cofactor is Cu cation.

The protein localises to the cell membrane. It carries out the reaction 4 Fe(II)-[cytochrome c] + O2 + 8 H(+)(in) = 4 Fe(III)-[cytochrome c] + 2 H2O + 4 H(+)(out). Its pathway is energy metabolism; oxidative phosphorylation. This chain is Cytochrome c oxidase subunit 1 (cbaA), found in Thermus thermophilus (strain ATCC 27634 / DSM 579 / HB8).